The chain runs to 448 residues: MQFQTIAAIATPLGTAGISVIRVSGDEAISKVNQIFKGKNLNKVKSHTIHYGHILNEDGSILDEVMISVFIAPKSFTKEDVVEISTHGGILITQKVLERILETGIELAQPGEFSKRAFLNGRIDLVQAEAIMDIIHATNENAIKVANKALNKATSSMIDNLKSKVLTLIAQIEVNIDYPEYDDAIIMSKELIYPRVNDLLDEINDILTKSKRTQYIREGVKTVIVGRPNVGKSSLLNALLNEERAIVSDIAGTTRDTIDAFVNLDGVTLQLIDTAGIRDALDTIEKIGVDRSRKAIHEAELVLLVLDLSQKLTKEDEMLLTLTEHKNRIIIGNKKDLPSYLEIDTNVQISTLEKEGLSVLESEILKTLKLDNLVDKDFNYLSNVRHIQKLKEAKTSLESVINAIHHDMPVDIYAVDLTTAWNRLGEILGNHQYGDLLTELFSKFCLGK.

(6S)-5-formyl-5,6,7,8-tetrahydrofolate contacts are provided by Arg-22, Glu-83, and Arg-122. The TrmE-type G domain occupies Gly-219–Lys-369. Asn-229 contributes to the K(+) binding site. GTP is bound by residues Asn-229–Ser-234, Ser-248–Thr-254, and Asp-273–Gly-276. Ser-233 serves as a coordination point for Mg(2+). Ser-248, Ile-250, and Thr-253 together coordinate K(+). Thr-254 provides a ligand contact to Mg(2+). Lys-448 lines the (6S)-5-formyl-5,6,7,8-tetrahydrofolate pocket.

The protein belongs to the TRAFAC class TrmE-Era-EngA-EngB-Septin-like GTPase superfamily. TrmE GTPase family. As to quaternary structure, homodimer. Heterotetramer of two MnmE and two MnmG subunits. K(+) serves as cofactor.

The protein localises to the cytoplasm. Its function is as follows. Exhibits a very high intrinsic GTPase hydrolysis rate. Involved in the addition of a carboxymethylaminomethyl (cmnm) group at the wobble position (U34) of certain tRNAs, forming tRNA-cmnm(5)s(2)U34. This is tRNA modification GTPase MnmE from Acholeplasma laidlawii (strain PG-8A).